We begin with the raw amino-acid sequence, 96 residues long: Integration host factor subunit alpha (96 aa).

This sequence belongs to the bacterial histone-like protein family. In terms of assembly, heterodimer of an alpha and a beta chain.

This protein is one of the two subunits of integration host factor, a specific DNA-binding protein that functions in genetic recombination as well as in transcriptional and translational control. This chain is Integration host factor subunit alpha, found in Haemophilus influenzae (strain 86-028NP).